The chain runs to 319 residues: Taste receptor type 2 member 30 (319 aa).

Position 1 (methionine 1) is a topological domain, extracellular. A helical membrane pass occupies residues 2 to 22 (ITFLPIIFSILIVVIFVVGNF). At 23–46 (ANGFIALVNSIEWVKRQKISFVDQ) the chain is on the cytoplasmic side. Residues 47–67 (ILTALAVSRVGLLWVLLLHWY) form a helical membrane-spanning segment. Residues 68 to 86 (ATQLNPAFYSVEVRITVYN) are Extracellular-facing. A helical transmembrane segment spans residues 87–107 (VWAVTNHFSSWLATSLSMFYL). Residues 108–126 (LKIANFSNLIFLRIKRRVK) lie on the Cytoplasmic side of the membrane. Residues 127-147 (SVVLVILLGPLLFLVCHLFVI) form a helical membrane-spanning segment. Topologically, residues 148 to 178 (NMDETIWTKEYEGNMTWKIKLKSAMYHSNMT) are extracellular. Asparagine 161 and asparagine 176 each carry an N-linked (GlcNAc...) asparagine glycan. Residues 179 to 199 (LTILANFVPLTLTLISFLLLI) traverse the membrane as a helical segment. Topologically, residues 200–229 (CSLCKHLKKMQLHGKGSQDPSTKVHIKALQ) are cytoplasmic. The helical transmembrane segment at 230–250 (TVTSFLLLCAIYFLSMIISVC) threads the bilayer. The Extracellular portion of the chain corresponds to 251–259 (NLGRLQKQP). The chain crosses the membrane as a helical span at residues 260-280 (VFMFCQAIIFSYPSTHPFILI). Residues 281-319 (LGNKKLKQIFLSVLWHVRYWVKDRSLRLHRFTRAALCKG) lie on the Cytoplasmic side of the membrane.

It belongs to the G-protein coupled receptor T2R family.

It localises to the membrane. Its function is as follows. Receptor that may play a role in the perception of bitterness and is gustducin-linked. May play a role in sensing the chemical composition of the gastrointestinal content. The activity of this receptor may stimulate alpha gustducin, mediate PLC-beta-2 activation and lead to the gating of TRPM5. The sequence is that of Taste receptor type 2 member 30 (TAS2R30) from Pan paniscus (Pygmy chimpanzee).